We begin with the raw amino-acid sequence, 338 residues long: MVQITKGKFDGLQRLSNDKGVIAALAIDQRGSLKKMIQQAKGTENKKDVEDFKQLVSEELTPYASAILLDLEYGTPAIKARHEGSGLLTSYEKTGYDATTPGKLPDLIEDLSALRIKENGGDAVKILVYYDPDEPAEINEIKYAFLERIGAECRAVDIPFFLEPITYDAKVTDSGSLEYAKLKPAKVKASIKEFSKPRYGVDVLKLEVPVNFKYVEGFAEGEVAYTQDEAARHFEECSDLSPLPFIYLSAGVTSEMFHKTIQFANQHNVQYSGVLCGRATWADGIEVYGKQGDDALREWLRTQGKENITSLDKLLDEGAVPWWTKYGSFEDVHVVEKQ.

The protein belongs to the aldolase LacD family.

It carries out the reaction D-tagatofuranose 1,6-bisphosphate = D-glyceraldehyde 3-phosphate + dihydroxyacetone phosphate. The protein operates within carbohydrate metabolism; D-tagatose 6-phosphate degradation; D-glyceraldehyde 3-phosphate and glycerone phosphate from D-tagatose 6-phosphate: step 2/2. In Listeria innocua serovar 6a (strain ATCC BAA-680 / CLIP 11262), this protein is Tagatose 1,6-diphosphate aldolase.